Here is a 358-residue protein sequence, read N- to C-terminus: Putative zinc metalloprotease BH06270 (358 aa).

Histidine 7 is a binding site for Zn(2+). Glutamate 8 is a catalytic residue. Histidine 11 is a binding site for Zn(2+). 3 consecutive transmembrane segments (helical) span residues 89–111 (ATVFAGPLFNVLFTVVILTFFFF), 282–304 (FLSLLNFTAFLSIGVGLINLFPI), and 332–354 (IIFRLGLCFVLLFMFFALFNDYF). The 76-residue stretch at 102 to 177 (TVVILTFFFF…IEFKMERSGQ (76 aa)) folds into the PDZ domain.

Belongs to the peptidase M50B family. The cofactor is Zn(2+).

It localises to the cell inner membrane. This is Putative zinc metalloprotease BH06270 from Bartonella henselae (strain ATCC 49882 / DSM 28221 / CCUG 30454 / Houston 1) (Rochalimaea henselae).